Here is a 138-residue protein sequence, read N- to C-terminus: uncharacterized protein (138 aa).

The segment at 84–104 is disordered; sequence PPKKTSPATSSSLKPRPGPRG. The segment covering 85–98 has biased composition (low complexity); sequence PKKTSPATSSSLKP.

It to M.pneumoniae MPN_413 and MPN_463.

This is an uncharacterized protein from Mycoplasma pneumoniae (strain ATCC 29342 / M129 / Subtype 1) (Mycoplasmoides pneumoniae).